A 470-amino-acid polypeptide reads, in one-letter code: 3-isopropylmalate dehydratase large subunit (470 aa).

[4Fe-4S] cluster-binding residues include Cys351, Cys411, and Cys414.

The protein belongs to the aconitase/IPM isomerase family. LeuC type 1 subfamily. In terms of assembly, heterodimer of LeuC and LeuD. The cofactor is [4Fe-4S] cluster.

The catalysed reaction is (2R,3S)-3-isopropylmalate = (2S)-2-isopropylmalate. The protein operates within amino-acid biosynthesis; L-leucine biosynthesis; L-leucine from 3-methyl-2-oxobutanoate: step 2/4. Catalyzes the isomerization between 2-isopropylmalate and 3-isopropylmalate, via the formation of 2-isopropylmaleate. The polypeptide is 3-isopropylmalate dehydratase large subunit (Rhodopseudomonas palustris (strain HaA2)).